The following is a 165-amino-acid chain: Shikimate kinase (165 aa).

ATP is bound at residue 11 to 16 (GAGKTT). Thr15 provides a ligand contact to Mg(2+). Asp33, Arg57, and Gly78 together coordinate substrate. An ATP-binding site is contributed by Arg116. Arg134 is a substrate binding site.

The protein belongs to the shikimate kinase family. Monomer. Mg(2+) serves as cofactor.

It localises to the cytoplasm. It carries out the reaction shikimate + ATP = 3-phosphoshikimate + ADP + H(+). It participates in metabolic intermediate biosynthesis; chorismate biosynthesis; chorismate from D-erythrose 4-phosphate and phosphoenolpyruvate: step 5/7. Its function is as follows. Catalyzes the specific phosphorylation of the 3-hydroxyl group of shikimic acid using ATP as a cosubstrate. This Bacillus cereus (strain G9842) protein is Shikimate kinase.